Reading from the N-terminus, the 535-residue chain is Dual specificity mitogen-activated protein kinase kinase 7 (535 aa).

An N-acetylalanine modification is found at A2. A coiled-coil region spans residues 2–30 (AASSLEQKLSRLEAKLKQENREARRRIDL). A d domain region spans residues 37–73 (QRPRPIIVITLSPAPAPSQRAALQLPLANDGGSRSPS). The tract at residues 63–93 (LANDGGSRSPSSESSPQHPTPPTRPRHMLGL) is disordered. The span at 69–79 (SRSPSSESSPQ) shows a compositional bias: low complexity. The Protein kinase domain maps to 136–396 (LENLGEMGSG…YNKLLEHSFI (261 aa)). ATP is bound by residues 142 to 150 (MGSGTCGQV) and K165. The active-site Proton acceptor is the D259. Position 287 is a phosphoserine; by MAP3K (S287). The residue at position 291 (T291) is a Phosphothreonine; by MAP3K. Residues 393–416 (HSFIKHYEILEVDVASWFKDVMAK) form a DVD domain region. Phosphoserine is present on S427.

Belongs to the protein kinase superfamily. STE Ser/Thr protein kinase family. MAP kinase kinase subfamily. Interacts with RASSF7, the interaction promotes phosphorylation. Interacts with VRK2. Interacts (via its D domain) with its substrates MAPK8/JNK1, MAPK9/JNK2 and MAPK10/JNK3. Interacts (via its DVD domain) with MAP3Ks activators like MAP3K5/ASK1 and MAP3K1/MEKK1. Interacts with SH3RF1, MAPK8IP1/JIP1, MAPK8IP2/JIP2 and MAPK8IP3/JIP3 scaffold proteins. Found in a complex with SH3RF1, RAC1, MAP3K11/MLK3, MAPK8IP1/JIP1 and MAPK8/JNK1. Found in a complex with SH3RF1, RAC2, MAP3K7/TAK1, MAPK8IP1/JIP1, MAPK8/JNK1 and MAPK9/JNK2. Requires Mg(2+) as cofactor. In terms of processing, activated by phosphorylation on Ser-287 and Thr-291 by MAP kinase kinase kinases (MAP3Ks). In terms of tissue distribution, expressed at high levels in brain, lung, liver, skeletal muscle, kidney, and testis and at lower levels in the heart and spleen.

Its subcellular location is the nucleus. The protein localises to the cytoplasm. It catalyses the reaction L-seryl-[protein] + ATP = O-phospho-L-seryl-[protein] + ADP + H(+). The enzyme catalyses L-threonyl-[protein] + ATP = O-phospho-L-threonyl-[protein] + ADP + H(+). The catalysed reaction is L-tyrosyl-[protein] + ATP = O-phospho-L-tyrosyl-[protein] + ADP + H(+). Its activity is regulated as follows. Activated by phosphorylation by specific MAP kinase kinase kinases such as MAP3K1/MEKK1, MAP3K3/MEKK3, MAP3K11/MLK3 and MAP3K12/DLK. Isoforms 3 and 4 have lower basal activity but a higher level of inducible activation, than isoforms 2, 6, 7 and 8. Dual specificity protein kinase which acts as an essential component of the MAP kinase signal transduction pathway. Essential component of the stress-activated protein kinase/c-Jun N-terminal kinase (SAP/JNK) signaling pathway. With MAP2K4/MKK4, is the one of the only known kinase to directly activate the stress-activated protein kinase/c-Jun N-terminal kinases MAPK8/JNK1, MAPK9/JNK2 and MAPK10/JNK3. MAP2K4/MKK4 and MAP2K7/MKK7 both activate the JNKs by phosphorylation, but they differ in their preference for the phosphorylation site in the Thr-Pro-Tyr motif. MAP2K4/MKK4 shows preference for phosphorylation of the Tyr residue and MAP2K7/MKK7 for the Thr residue. The monophosphorylation of JNKs on the Thr residue is sufficient to increase JNK activity indicating that MAP2K7/MKK7 is important to trigger JNK activity, while the additional phosphorylation of the Tyr residue by MAP2K4/MKK4 ensures optimal JNK activation. Has a specific role in JNK signal transduction pathway activated by pro-inflammatory cytokines. The MKK/JNK signaling pathway is also involved in mitochondrial death signaling pathway, including the release cytochrome c, leading to apoptosis. Part of a non-canonical MAPK signaling pathway, composed of the upstream MAP3K12 kinase and downstream MAP kinases MAPK1/ERK2 and MAPK3/ERK1, that enhances the AP-1-mediated transcription of APP in response to APOE. This Mus musculus (Mouse) protein is Dual specificity mitogen-activated protein kinase kinase 7.